Consider the following 248-residue polypeptide: ATP synthase subunit a, chloroplastic (248 aa).

A run of 5 helical transmembrane segments spans residues 35–55 (GQVFIVSWLVIATLLTLSFLG), 94–114 (VPYIATLFLFILGCNWAGALI), 133–153 (INTTVALSLLTSLAYFYAGLS), 202–222 (VFTLLIPILIPLPVMILGLFA), and 224–244 (SIQALIFSTLSAAYIGEAMEG).

This sequence belongs to the ATPase A chain family. As to quaternary structure, F-type ATPases have 2 components, CF(1) - the catalytic core - and CF(0) - the membrane proton channel. CF(1) has five subunits: alpha(3), beta(3), gamma(1), delta(1), epsilon(1). CF(0) has four main subunits: a, b, b' and c.

The protein resides in the plastid. The protein localises to the chloroplast thylakoid membrane. Key component of the proton channel; it plays a direct role in the translocation of protons across the membrane. The protein is ATP synthase subunit a, chloroplastic of Pyropia yezoensis (Susabi-nori).